Here is a 549-residue protein sequence, read N- to C-terminus: Cell pattern formation-associated protein StuA (549 aa).

Residues R86–P192 enclose the HTH APSES-type domain. Positions G120–E141 form a DNA-binding region, H-T-H motif. 4 disordered regions span residues A205–I227, S246–R288, R332–N466, and A514–G549. Positions S246–Q266 are enriched in polar residues. 3 stretches are compositionally biased toward basic and acidic residues: residues R278–R288, R332–H346, and R385–S395. The nuclear localization domain stretch occupies residues T516–Q545. Positions A532–G549 are enriched in low complexity.

It belongs to the EFG1/PHD1/stuA family.

The protein resides in the nucleus. Its function is as follows. Transcription factor that regulates asexual reproduction. Binds the StuA-response elements (StRE) with the consensus sequence 5'-(A/T)CGCG(T/A)N(A/C)-3' at the promoters of target genes. This is Cell pattern formation-associated protein StuA from Gibberella moniliformis (strain M3125 / FGSC 7600) (Maize ear and stalk rot fungus).